The sequence spans 394 residues: Phosphopentomutase (394 aa).

Mn(2+)-binding residues include Asp-13, Asp-286, His-291, Asp-327, His-328, and His-339.

This sequence belongs to the phosphopentomutase family. Mn(2+) is required as a cofactor.

It is found in the cytoplasm. The enzyme catalyses 2-deoxy-alpha-D-ribose 1-phosphate = 2-deoxy-D-ribose 5-phosphate. It carries out the reaction alpha-D-ribose 1-phosphate = D-ribose 5-phosphate. It functions in the pathway carbohydrate degradation; 2-deoxy-D-ribose 1-phosphate degradation; D-glyceraldehyde 3-phosphate and acetaldehyde from 2-deoxy-alpha-D-ribose 1-phosphate: step 1/2. Functionally, isomerase that catalyzes the conversion of deoxy-ribose 1-phosphate (dRib-1-P) and ribose 1-phosphate (Rib-1-P) to deoxy-ribose 5-phosphate (dRib-5-P) and ribose 5-phosphate (Rib-5-P), respectively. The polypeptide is Phosphopentomutase (Bacillus cereus (strain AH187)).